Reading from the N-terminus, the 116-residue chain is Putative superoxide reductase (116 aa).

Fe cation contacts are provided by His-20, His-46, His-52, Cys-101, and His-104.

Belongs to the desulfoferrodoxin family. Fe cation is required as a cofactor.

It carries out the reaction reduced [rubredoxin] + superoxide + 2 H(+) = oxidized [rubredoxin] + H2O2. Its function is as follows. Uses electrons from reduced NADP, by way of rubredoxin and an oxidoreductase, to catalyze the reduction of superoxide to hydrogen peroxide. This chain is Putative superoxide reductase, found in Methanocaldococcus jannaschii (strain ATCC 43067 / DSM 2661 / JAL-1 / JCM 10045 / NBRC 100440) (Methanococcus jannaschii).